The chain runs to 639 residues: ATP-dependent rRNA helicase spb4 (639 aa).

The Q motif signature appears at 14 to 42; that stretch reads WEAVSPSLSEWVLDAVASWGFSKMTPVQA. Residues 45–249 form the Helicase ATP-binding domain; that stretch reads IPLFMAHKDV…RVGLRNPVKV (205 aa). 58-65 provides a ligand contact to ATP; the sequence is AVTGSGKT. Positions 197-200 match the DEAD box motif; sequence DEAD. One can recognise a Helicase C-terminal domain in the interval 283-437; that stretch reads TLRPILTSLQ…PISISDSDAS (155 aa). A coiled-coil region spans residues 521 to 624; the sequence is AYKDKQREKR…LRRAEKAAGK (104 aa). The interval 536–639 is disordered; it reads QESAEAGAQQ…GDDDEFEGFD (104 aa). A compositionally biased stretch (basic and acidic residues) spans 575-622; it reads KHLQQEKRRWEKMTEEEKQKARETQKMLEEIRQKNEEARALRRAEKAA. Acidic residues predominate over residues 628–639; that stretch reads NDGDDDEFEGFD.

It belongs to the DEAD box helicase family. DDX55/SPB4 subfamily. Component of pre-60S ribosomal complexes.

Its subcellular location is the nucleus. The protein resides in the nucleolus. The enzyme catalyses ATP + H2O = ADP + phosphate + H(+). In terms of biological role, ATP-binding RNA helicase involved in the biogenesis of 60S ribosomal subunits. Binds 90S pre-ribosomal particles and dissociates from pre-60S ribosomal particles after processing of 27SB pre-rRNA. Required for the normal formation of 18S rRNA through the processing of pre-rRNAs at sites A0, A1 and A2, and the normal formation of 25S and 5.8S rRNAs through the processing of pre-rRNAs at sites C1 and C2. This Aspergillus terreus (strain NIH 2624 / FGSC A1156) protein is ATP-dependent rRNA helicase spb4.